A 172-amino-acid polypeptide reads, in one-letter code: DNA-directed RNA polymerase II subunit rpb7 (172 aa).

The protein belongs to the eukaryotic RPB7/RPC8 RNA polymerase subunit family. Component of the RNA polymerase II (Pol II) complex consisting of 12 subunits. RPB4 and RPB7 form a subcomplex that protrudes from the 10-subunit Pol II core complex.

The protein resides in the nucleus. In terms of biological role, DNA-dependent RNA polymerase catalyzes the transcription of DNA into RNA using the four ribonucleoside triphosphates as substrates. Component of RNA polymerase II which synthesizes mRNA precursors and many functional non-coding RNAs. Pol II is the central component of the basal RNA polymerase II transcription machinery. It is composed of mobile elements that move relative to each other. RPB7 is part of a subcomplex with RPB4 that binds to a pocket formed by RPB1, RPB2 and RPB6 at the base of the clamp element. The RPB4-RPB7 subcomplex seems to lock the clamp via RPB7 in the closed conformation thus preventing double-stranded DNA to enter the active site cleft. The RPB4-RPB7 subcomplex binds single-stranded DNA and RNA. This is DNA-directed RNA polymerase II subunit rpb7 (polr2g) from Dictyostelium discoideum (Social amoeba).